The sequence spans 80 residues: Acyl carrier protein (80 aa).

The 76-residue stretch at 4–79 (ANVEQKVKNI…DAVNYITTHK (76 aa)) folds into the Carrier domain. Ser39 carries the O-(pantetheine 4'-phosphoryl)serine modification.

The protein belongs to the acyl carrier protein (ACP) family. Post-translationally, 4'-phosphopantetheine is transferred from CoA to a specific serine of apo-ACP by AcpS. This modification is essential for activity because fatty acids are bound in thioester linkage to the sulfhydryl of the prosthetic group.

It localises to the cytoplasm. It participates in lipid metabolism; fatty acid biosynthesis. Carrier of the growing fatty acid chain in fatty acid biosynthesis. This is Acyl carrier protein from Anaeromyxobacter sp. (strain Fw109-5).